The sequence spans 58 residues: Metallothionein (58 aa).

Positions 1–29 (MPDPCCIDKCECKEGGCKAGCKCTSCRCT) are beta. Residues cysteine 5, cysteine 6, cysteine 10, cysteine 12, cysteine 17, cysteine 21, cysteine 23, cysteine 26, cysteine 28, cysteine 31, cysteine 34, cysteine 38, cysteine 40, cysteine 46, cysteine 50, cysteine 54, cysteine 56, and cysteine 57 each contribute to the a divalent metal cation site. Positions 30–58 (PCEKCSSGCKCTTKEDCCKTCTKPCSCCP) are alpha.

The protein belongs to the metallothionein superfamily. Type 3 family.

In terms of biological role, metallothioneins have a high content of cysteine residues that bind various heavy metals. Class I MTS in marine crustacea are involved in the sequestration of elevated levels of heavy-metal ions. The protein is Metallothionein of Carcinus maenas (Common shore crab).